The sequence spans 209 residues: Ribosomal RNA large subunit methyltransferase E (209 aa).

S-adenosyl-L-methionine contacts are provided by Gly63, Trp65, Asp83, Asp99, and Asp124. The active-site Proton acceptor is Lys164.

It belongs to the class I-like SAM-binding methyltransferase superfamily. RNA methyltransferase RlmE family.

It localises to the cytoplasm. The catalysed reaction is uridine(2552) in 23S rRNA + S-adenosyl-L-methionine = 2'-O-methyluridine(2552) in 23S rRNA + S-adenosyl-L-homocysteine + H(+). Functionally, specifically methylates the uridine in position 2552 of 23S rRNA at the 2'-O position of the ribose in the fully assembled 50S ribosomal subunit. The polypeptide is Ribosomal RNA large subunit methyltransferase E (Shewanella sp. (strain ANA-3)).